We begin with the raw amino-acid sequence, 291 residues long: Elongation factor Ts (291 aa).

Residues 78–81 form an involved in Mg(2+) ion dislocation from EF-Tu region; that stretch reads TDFV.

Belongs to the EF-Ts family.

The protein resides in the cytoplasm. In terms of biological role, associates with the EF-Tu.GDP complex and induces the exchange of GDP to GTP. It remains bound to the aminoacyl-tRNA.EF-Tu.GTP complex up to the GTP hydrolysis stage on the ribosome. In Ureaplasma urealyticum serovar 10 (strain ATCC 33699 / Western), this protein is Elongation factor Ts.